A 178-amino-acid chain; its full sequence is Riboflavin kinase (178 aa).

Mg(2+) is bound by residues Thr39 and Asn41. The active-site Nucleophile is the Glu116.

It belongs to the flavokinase family. Zn(2+) serves as cofactor. Mg(2+) is required as a cofactor.

The catalysed reaction is riboflavin + ATP = FMN + ADP + H(+). It participates in cofactor biosynthesis; FMN biosynthesis; FMN from riboflavin (ATP route): step 1/1. Functionally, catalyzes the phosphorylation of riboflavin (vitamin B2) to form flavin mononucleotide (FMN) coenzyme. The protein is Riboflavin kinase (FMN1) of Scheffersomyces stipitis (strain ATCC 58785 / CBS 6054 / NBRC 10063 / NRRL Y-11545) (Yeast).